The following is a 484-amino-acid chain: UDP-N-acetylmuramate--L-alanine ligase (484 aa).

122–128 lines the ATP pocket; sequence GTHGKTT.

It belongs to the MurCDEF family.

It localises to the cytoplasm. It catalyses the reaction UDP-N-acetyl-alpha-D-muramate + L-alanine + ATP = UDP-N-acetyl-alpha-D-muramoyl-L-alanine + ADP + phosphate + H(+). It functions in the pathway cell wall biogenesis; peptidoglycan biosynthesis. Functionally, cell wall formation. The sequence is that of UDP-N-acetylmuramate--L-alanine ligase from Mycobacterium sp. (strain JLS).